A 242-amino-acid polypeptide reads, in one-letter code: Invasion chromosome antigen R (242 aa).

It is found in the secreted. May contribute to pathogenesis, although some of its characteristics suggest it is a fossil gene. This chain is Invasion chromosome antigen R, found in Shigella flexneri serotype 5a (strain M90T).